Consider the following 194-residue polypeptide: MFLTAVNPQPLSTPSWQIETKYSTKVLTGNWMEERRKFTRDTDKTPQSIYRKEYIPFPDHRPDQISRWYGKRKVEGLPYKHLITHHQEPPHRYLISTYDDHYNRHGYNPGLPPLRTWNGQKLLWLPEKSDFPLLAPPTNYGLYEQLKQRQLTPKAGLKQSTYTSSYPRPPLCAMSWREHAVPVPPHRLHPLPHF.

Mn stretches follow at residues 45 to 60 (TPQS…FPDH) and 95 to 107 (ISTY…RHGY).

As to quaternary structure, microtubule inner protein component of sperm flagellar doublet microtubules. Expressed in airway epithelial cells.

It localises to the cytoplasm. The protein localises to the cytoskeleton. Its subcellular location is the cilium axoneme. It is found in the flagellum axoneme. Its function is as follows. Microtubule inner protein (MIP) part of the dynein-decorated doublet microtubules (DMTs) in cilia axoneme, which is required for motile cilia beating. This chain is Cilia- and flagella-associated protein 107, found in Homo sapiens (Human).